A 62-amino-acid polypeptide reads, in one-letter code: MGMRMMFTVFLLVVLATTVVSFTLDRASDGASAAADLVARGIRGNCCMFHTCPIDYSRFNCP.

The first 21 residues, 1 to 21 (MGMRMMFTVFLLVVLATTVVS), serve as a signal peptide directing secretion. The propeptide occupies 22–40 (FTLDRASDGASAAADLVAR). Disulfide bonds link Cys46–Cys52 and Cys47–Cys61.

This sequence belongs to the conotoxin A superfamily. Expressed by the venom duct.

It is found in the secreted. In terms of biological role, the short (45-61) amidated synthetic peptide inhibits the rat neuronal alpha-3-beta-2/CHRNA3-CHRNB2 nicotinic acetylcholine receptor (nAChR) (IC(50)=1.16 uM). It also inhibits Cav2.2/CACNA1C voltage-gated calcium channel (IC(50)=398 nM). In vivo, when tested in rat pain models, this short amidated peptide increases the pain threshold. This is Alpha-conotoxin Vt1.27 from Conus planorbis (Planorbis cone).